A 268-amino-acid polypeptide reads, in one-letter code: Small ribosomal subunit protein eS1 (268 aa).

Residues 1 to 21 (MAVGKNKGLSKGGKKGGKKKV) form a disordered region.

Belongs to the eukaryotic ribosomal protein eS1 family. In terms of assembly, component of the small ribosomal subunit. Mature ribosomes consist of a small (40S) and a large (60S) subunit. The 40S subunit contains about 33 different proteins and 1 molecule of RNA (18S). The 60S subunit contains about 49 different proteins and 3 molecules of RNA (28S, 5.8S and 5S).

The protein localises to the cytoplasm. In terms of biological role, essential for oogenesis; required for late follicle cell development. This is Small ribosomal subunit protein eS1 from Drosophila sechellia (Fruit fly).